Reading from the N-terminus, the 314-residue chain is MTFRMILAFFTLCATSLFFGANQIEWSLLPTFNEKAWLPIIASRLPRLVALILTGSGLAMCGVILQHIVRNRFVEPGTTGSLDAAKLGILVSIVMLPSSDKLERMFFAVLFCFAAGLVYIAIIRKVKFSNTALVPVIGLMFGSVLSALAEFYAYQNNILQSMSGWLMGDFSKVVQEHYEIIFLILPITLLTYLYAHRFTVMGMGEDIASNLGISYAMTAALGLILVSITVAVTVVTVGAIHFVGLVIPNLVALKYGDHLKNTLPIVALGGASLLIFCDVISRVVLFPFEVPVGLTASAVGGVMFLAFLLKGAKA.

10 helical membrane-spanning segments follow: residues 1–21 (MTFR…FFGA), 49–69 (VALI…QHIV), 76–96 (PGTT…IVML), 103–123 (ERMF…IAII), 132–152 (ALVP…AEFY), 180–200 (IIFL…RFTV), 207–226 (IASN…LILV), 230–252 (VAVT…NLVA), 265–285 (IVAL…RVVL), and 288–308 (FEVP…LAFL).

It belongs to the binding-protein-dependent transport system permease family. FecCD subfamily. In terms of assembly, part of an iron transport system composed of the outer membrane receptor FatA, the periplasmic binding protein FatB and the inner membrane proteins FatC and FatD.

It localises to the cell inner membrane. Involved in the uptake of iron in complex with the siderophore anguibactin. Responsible for the translocation of ferric-anguibactin across the cytoplasmic membrane. This chain is Ferric-anguibactin transport system permease protein FatD, found in Vibrio anguillarum (strain ATCC 68554 / 775) (Listonella anguillarum).